The primary structure comprises 718 residues: Mitotic spindle assembly checkpoint protein MAD1 (718 aa).

The residue at position 1 (M1) is an N-acetylmethionine. S16 is subject to Phosphoserine. A coiled-coil region spans residues 46–632; that stretch reads QQSMQLEERA…QTKIQEFRKA (587 aa). At K61 the chain carries N6-acetyllysine; alternate. K61 is covalently cross-linked (Glycyl lysine isopeptide (Lys-Gly) (interchain with G-Cter in SUMO2); alternate). Residues 79-82 carry the Nuclear localization signal motif; sequence KRAR. S214 carries the post-translational modification Phosphoserine. The important for interaction with IK stretch occupies residues 301–340; the sequence is VGLELENERLLAKLQSWERLDQTMGLSIRTPEDLSRFVVE. Positions 380–532 are necessary for interaction with NEK2; sequence LLEERKKRET…EAQLERRALQ (153 aa). S428 is modified (phosphoserine). The segment at 439 to 480 is important for interaction with IK; the sequence is EDMVQKVHSHSAEMEAQLSQALEELGGQKQRADMLEMELKML. A necessary for interaction with MAD2L1 region spans residues 540–551; sequence TKVLHMSLNPTS. S598 and S610 each carry phosphoserine. The residue at position 634 (Y634) is a Phosphotyrosine. T716 is modified (phosphothreonine).

It belongs to the MAD1 family. In terms of assembly, homodimer. Dimerizes via its N- and C- terminal regions. Heterodimerizes with MAD2L1 in order to form a tetrameric MAD1L1-MAD2L1 core complex. Interacts with the closed conformation form of MAD2L1 (C-MAD2) and open conformation form of MAD2L1 (O-MAD2). It is unclear whether MAD1L1 dimerization promotes the conversion of closed to open conformation of MAD2L1. Formation of a heterotetrameric core complex containing two molecules each of MAD1L1 and of MAD2L1 promotes binding of another molecule of MAD2L1 to each MAD2L1, resulting in a heterohexamer. Perturbation of the original MAD1L1-MAD2L1 structure by the spindle checkpoint may decrease MAD2L1 affinity for MAD1L1. CDC20 can compete with MAD1L1 for MAD2L1 binding, until the attachment and/or tension dampen the checkpoint signal, preventing further release of MAD2L1 on to CDC20. Also able to interact with the BUB1/BUB3 complex. Interacts with NEK2. Interacts with TTK. Interacts with TPR; the interactions occurs in a microtubule-independent manner. Interacts with IK. Interacts with the viral Tax protein. Interacts with PRAP1. As to quaternary structure, interacts with MAD2L1; this interaction leads to the cytoplasmic sequestration of MAD2L1. Interacts with PRAP1. Post-translationally, phosphorylated; by BUB1. Become hyperphosphorylated in late S through M phases or after mitotic spindle damage. Phosphorylated; by TTK. As to expression, expressed in hepatocellular carcinomas and hepatoma cell lines (at protein level).

It localises to the nucleus. The protein localises to the chromosome. It is found in the centromere. Its subcellular location is the kinetochore. The protein resides in the nucleus envelope. It localises to the cytoplasm. The protein localises to the cytoskeleton. It is found in the microtubule organizing center. Its subcellular location is the centrosome. The protein resides in the spindle. It localises to the spindle pole. Component of the spindle-assembly checkpoint that prevents the onset of anaphase until all chromosomes are properly aligned at the metaphase plate. Forms a heterotetrameric complex with the closed conformation form of MAD2L1 (C-MAD2) at unattached kinetochores during prometaphase, recruits an open conformation of MAD2L1 (O-MAD2) and promotes the conversion of O-MAD2 to C-MAD2, which ensures mitotic checkpoint signaling. Its function is as follows. Sequesters MAD2L1 in the cytoplasm preventing its function as an activator of the mitotic spindle assembly checkpoint (SAC) resulting in SAC impairment and chromosomal instability in hepatocellular carcinomas. The polypeptide is Mitotic spindle assembly checkpoint protein MAD1 (MAD1L1) (Homo sapiens (Human)).